Reading from the N-terminus, the 165-residue chain is Endoribonuclease YbeY (165 aa).

Residues histidine 130, histidine 134, and histidine 140 each coordinate Zn(2+).

This sequence belongs to the endoribonuclease YbeY family. Requires Zn(2+) as cofactor.

It is found in the cytoplasm. Single strand-specific metallo-endoribonuclease involved in late-stage 70S ribosome quality control and in maturation of the 3' terminus of the 16S rRNA. This Streptococcus agalactiae serotype Ia (strain ATCC 27591 / A909 / CDC SS700) protein is Endoribonuclease YbeY.